A 66-amino-acid chain; its full sequence is Jindongenin-1a (66 aa).

The signal sequence occupies residues 1 to 22 (MFTLKKPLLLLFFLGTVSLSLC). Positions 23 to 40 (EQERAADDDEGEVIEEEV) are excised as a propeptide. An intrachain disulfide couples C60 to C66.

Expressed by the skin glands.

Its subcellular location is the secreted. Displays broad-spectrum antibacterial activity against a range of Gram-positive and Gram-negative bacteria. Also displays antifungal activity against C.albicans ATCC 2002. Has low hemolytic activity, low cytotoxicity and low antioxidant activity. This is Jindongenin-1a from Amolops jingdongensis (Chinese torrent frog).